The sequence spans 131 residues: Small ribosomal subunit protein uS11 (131 aa).

The protein belongs to the universal ribosomal protein uS11 family. Part of the 30S ribosomal subunit. Interacts with proteins S7 and S18. Binds to IF-3.

In terms of biological role, located on the platform of the 30S subunit, it bridges several disparate RNA helices of the 16S rRNA. Forms part of the Shine-Dalgarno cleft in the 70S ribosome. This is Small ribosomal subunit protein uS11 from Neisseria gonorrhoeae (strain ATCC 700825 / FA 1090).